The sequence spans 237 residues: Putative glutathione-dependent formaldehyde-activating enzyme (237 aa).

The CENP-V/GFA domain maps to 38-152 (ITLICHCPPS…LGQSGGSEGE (115 aa)). Cysteine 42, cysteine 44, cysteine 67, cysteine 69, cysteine 72, cysteine 114, and cysteine 117 together coordinate Zn(2+).

Belongs to the Gfa family. Zn(2+) is required as a cofactor.

The catalysed reaction is S-(hydroxymethyl)glutathione = glutathione + formaldehyde. Its pathway is one-carbon metabolism; formaldehyde degradation; formate from formaldehyde (glutathione route): step 1/3. Functionally, catalyzes the condensation of formaldehyde and glutathione to S-hydroxymethylglutathione. The protein is Putative glutathione-dependent formaldehyde-activating enzyme of Sordaria macrospora (strain ATCC MYA-333 / DSM 997 / K(L3346) / K-hell).